The chain runs to 295 residues: MSLKHFIQITKPGIIFGNVLSVAGGFFLASKGHVDLAIFLAAMIGTSLVVASGCVFNNCIDRDIDLKMERTKNRVLVQGLISLEVALVYASILGVAGVALLYYVANPLAALFAVIGFVIYVGFYSLYLKRKSVHGTLVGSLSGAMPPVIGYVAVSNSFDMAALTLLVMFSLWQMPHSYAIAIFRFNDYLAASIPVLPVKRGIRVAKKHILLYILAFLVATLMLTFSGYAGMSYLAVAAAMGMYWLYMAWTGYKAVDDTVWARKLFVFSIFTITALSVMMSVDFKAPTELLLTYAH.

9 helical membrane-spanning segments follow: residues 9-29 (ITKP…FFLA), 36-56 (LAIF…GCVF), 85-105 (VALV…YYVA), 108-128 (LAAL…SLYL), 135-155 (GTLV…VAVS), 163-183 (LTLL…IAIF), 209-229 (ILLY…SGYA), 230-250 (GMSY…MAWT), and 263-283 (KLFV…SVDF).

This sequence belongs to the UbiA prenyltransferase family. Protoheme IX farnesyltransferase subfamily.

The protein localises to the cell inner membrane. It catalyses the reaction heme b + (2E,6E)-farnesyl diphosphate + H2O = Fe(II)-heme o + diphosphate. Its pathway is porphyrin-containing compound metabolism; heme O biosynthesis; heme O from protoheme: step 1/1. Functionally, converts heme B (protoheme IX) to heme O by substitution of the vinyl group on carbon 2 of heme B porphyrin ring with a hydroxyethyl farnesyl side group. The protein is Protoheme IX farnesyltransferase 2 of Pseudomonas fluorescens (strain ATCC BAA-477 / NRRL B-23932 / Pf-5).